Reading from the N-terminus, the 189-residue chain is MNDKTTRGRASKVDLLPPNIKSTLTMMLRDKQYSQAEILEEINNIIADSGLDESMQLSKTGLNRFASKMERFGKKIREAREVAEVWTKQLVEAPQSDIGKLLMEAVKTMAFDLTLNADEAVANDPKFLNQLALIANRIEQAQSISEERERKVRKEVAQQAADTAEKVISQAGLSADTVAQIKQQILGIA.

This sequence to phage Mu protein gp27.

In Haemophilus influenzae (strain ATCC 51907 / DSM 11121 / KW20 / Rd), this protein is Mu-like prophage FluMu protein gp27.